We begin with the raw amino-acid sequence, 117 residues long: Hainantoxin-XV-4 (117 aa).

The N-terminal stretch at Met-1–Ser-20 is a signal peptide. Positions Ser-20–Glu-55 are disordered. Residues Ser-21–Arg-56 constitute a propeptide that is removed on maturation. A compositionally biased stretch (basic and acidic residues) spans Asn-23 to Glu-55. 4 disulfides stabilise this stretch: Cys-58–Cys-72, Cys-65–Cys-78, Cys-69–Cys-115, and Cys-71–Cys-91.

It belongs to the neurotoxin 03 (Tx2) family. 02 subfamily. HNTX-XV sub-subfamily. As to expression, expressed by the venom gland.

The protein resides in the secreted. Functionally, putative ion channel inhibitor. The protein is Hainantoxin-XV-4 of Cyriopagopus hainanus (Chinese bird spider).